Consider the following 1440-residue polypeptide: Glucose transporter type 1 (1440 aa).

An N-terminal signal peptide occupies residues 1–23; sequence MAFLCAPGLTFFLTYSIFSAVLG. The Cytoplasmic segment spans residues 24-67; that stretch reads MLQFGYNTGVINAPEKNIENFMKDVYKDRYGEDISEEFIQQLYS. The helical transmembrane segment at 68–88 threads the bilayer; sequence VAVSIFAIGGMLGGFSGGWMA. The Extracellular portion of the chain corresponds to 89 to 95; the sequence is NRFGRKG. Residues 96–116 form a helical membrane-spanning segment; it reads GLLLNNVLGIAGACLMGFTKV. Topologically, residues 117-127 are cytoplasmic; that stretch reads SHSYEMLFLGR. The helical transmembrane segment at 128 to 148 threads the bilayer; the sequence is FIIGVNCGLNTSLVPMYISEI. Topologically, residues 149–162 are extracellular; the sequence is APLNLRGGLGTVNQ. Glutamine 162 is a D-glucose binding site. The helical transmembrane segment at 163–183 threads the bilayer; sequence LAVTVGLLLSQVLGIEQILGT. Residues 184-186 are Cytoplasmic-facing; the sequence is NEG. Residues 187–207 form a helical membrane-spanning segment; sequence WPILLGLAICPAILQLILLPV. Topologically, residues 208–272 are extracellular; it reads CPESPRYLLI…LICSPTLRPP (65 aa). The helical transmembrane segment at 273–293 threads the bilayer; that stretch reads LIIGIVMQLSQQFSGINAVFY. D-glucose contacts are provided by residues 283 to 284 and asparagine 289; that span reads QQ. Topologically, residues 294-310 are cytoplasmic; the sequence is YSTSLFMSSGLTEESAK. A helical transmembrane segment spans residues 311–331; it reads FATIGIGAIMVVMTLVSIPLM. Over 332-339 the chain is Extracellular; it reads DRTGRRTL. The chain crosses the membrane as a helical span at residues 340–360; it reads HLYGLGGMFIFSIFITISFLI. At 361–372 the chain is on the cytoplasmic side; that stretch reads KEMIDWMSYLSV. The chain crosses the membrane as a helical span at residues 373 to 393; the sequence is VATLGFVVFFAVGPGSIPWMI. Tryptophan 391 contacts D-glucose. At 394–405 the chain is on the extracellular side; the sequence is TAELFSQGPRPS. The helical transmembrane segment at 406-426 threads the bilayer; sequence AMAIAVLVNWMANFVVGIGFP. The Cytoplasmic segment spans residues 427–429; it reads SMK. The helical transmembrane segment at 430–450 threads the bilayer; the sequence is TALENYTFLPFSVFLAIFWIF. The Extracellular segment spans residues 451 to 534; it reads TYKKVPETKN…GPYPLSDSTN (84 aa). N-linked (GlcNAc...) asparagine glycans are attached at residues asparagine 460 and asparagine 480. Residues 535–555 traverse the membrane as a helical segment; the sequence is LLGPGSSSYGPGGVLGLAGSG. Over 556 to 1440 the chain is Cytoplasmic; the sequence is SGLGGQCYTN…RKYTDFLRKK (885 aa). Disordered stretches follow at residues 628 to 708, 725 to 808, 966 to 987, 1000 to 1083, 1304 to 1330, and 1380 to 1401; these read ERFL…SRYA, QANP…HSVM, APEGSTLERQSSKGALGSSELP, FLAD…GSYH, LEGAGGGGASTTSEHSSSLPSPQPLTH, and ANSPHSQSHHSHAHTHTHGHHV. Residues 669 to 678 show a composition bias toward polar residues; it reads PPDSASVRST. Positions 686–704 are enriched in low complexity; the sequence is QPQQVHHQQQQVHHQQQHQ. Positions 730 to 739 are enriched in pro residues; sequence QAPPQQPAPP. Positions 754–789 are enriched in basic residues; it reads CQQRKHSHSPHHSRHTSPHSHHHHSHHSRHSRRSRR. Positions 1313–1330 are enriched in low complexity; sequence STTSEHSSSLPSPQPLTH.

It belongs to the major facilitator superfamily. Sugar transporter (TC 2.A.1.1) family. Glucose transporter subfamily.

The protein localises to the membrane. In terms of biological role, facilitative glucose transporter. This is Glucose transporter type 1 (Glut1) from Drosophila melanogaster (Fruit fly).